We begin with the raw amino-acid sequence, 1224 residues long: Probable serine/threonine-protein kinase DDB_G0292350 (1224 aa).

Disordered stretches follow at residues 57–98 (MSGS…STQR) and 252–284 (SSPSSSSSSIKTKNTTSTTTTTTTTKNLNDISN). Low complexity-rich tracts occupy residues 58-74 (SGSIQSDLSSSDNFTSS) and 83-95 (SSSNTSNRNSDNS). Coiled coils occupy residues 352–381 (LFKQQEKQHQQQQQQQQNQQDKEKFEKQNN) and 540–569 (DVQLSTKLNDEEETIEKEEEDLNSVDEYLT). 2 disordered regions span residues 693–784 (QPIP…FVIT) and 815–836 (FTNNNNNNNGGSTITTTTTNNI). Residues 743–768 (NNNNNNNNNINNNNINNNNINNNKNG) are compositionally biased toward low complexity. The segment covering 772–784 (GETPSPSSSFVIT) has biased composition (polar residues). In terms of domain architecture, Protein kinase spans 935-1193 (FRDKIKLGTG…PEMLLHHTFL (259 aa)). Residues 941–949 (LGTGAFGNV) and Lys964 contribute to the ATP site. The active-site Proton acceptor is Asp1063.

The protein belongs to the protein kinase superfamily. Ser/Thr protein kinase family. Requires Mg(2+) as cofactor.

It carries out the reaction L-seryl-[protein] + ATP = O-phospho-L-seryl-[protein] + ADP + H(+). It catalyses the reaction L-threonyl-[protein] + ATP = O-phospho-L-threonyl-[protein] + ADP + H(+). The chain is Probable serine/threonine-protein kinase DDB_G0292350 from Dictyostelium discoideum (Social amoeba).